Here is an 885-residue protein sequence, read N- to C-terminus: DNA mismatch repair protein MutS (885 aa).

626–633 (GPNMGGKS) contacts ATP.

The protein belongs to the DNA mismatch repair MutS family.

This protein is involved in the repair of mismatches in DNA. It is possible that it carries out the mismatch recognition step. This protein has a weak ATPase activity. The polypeptide is DNA mismatch repair protein MutS (Burkholderia cenocepacia (strain HI2424)).